A 321-amino-acid polypeptide reads, in one-letter code: Phospho-N-acetylmuramoyl-pentapeptide-transferase (321 aa).

Transmembrane regions (helical) follow at residues 1 to 21, 49 to 69, 77 to 97, 112 to 132, 140 to 160, 176 to 196, 200 to 220, 225 to 245, 250 to 270, and 300 to 320; these read MIYV…PILI, TMGG…AIIF, ILLL…DYII, FLAQ…FNMI, IPFT…IVFW, GLAT…SFML, AVGT…IYNV, VFMG…VSIM, ISLI…ILQV, and VVSV…WIGV.

The protein belongs to the glycosyltransferase 4 family. MraY subfamily. Requires Mg(2+) as cofactor.

Its subcellular location is the cell membrane. It catalyses the reaction UDP-N-acetyl-alpha-D-muramoyl-L-alanyl-gamma-D-glutamyl-L-lysyl-D-alanyl-D-alanine + di-trans,octa-cis-undecaprenyl phosphate = Mur2Ac(oyl-L-Ala-gamma-D-Glu-L-Lys-D-Ala-D-Ala)-di-trans,octa-cis-undecaprenyl diphosphate + UMP. The protein operates within cell wall biogenesis; peptidoglycan biosynthesis. Catalyzes the initial step of the lipid cycle reactions in the biosynthesis of the cell wall peptidoglycan: transfers peptidoglycan precursor phospho-MurNAc-pentapeptide from UDP-MurNAc-pentapeptide onto the lipid carrier undecaprenyl phosphate, yielding undecaprenyl-pyrophosphoryl-MurNAc-pentapeptide, known as lipid I. In Staphylococcus carnosus (strain TM300), this protein is Phospho-N-acetylmuramoyl-pentapeptide-transferase.